The chain runs to 71 residues: Small ribosomal subunit protein bS21 (71 aa).

Residues 50–59 (AAAVKRHAKK) are compositionally biased toward basic residues. The tract at residues 50–71 (AAAVKRHAKKVQREQRRAVRLY) is disordered. The segment covering 60-71 (VQREQRRAVRLY) has biased composition (basic and acidic residues).

This sequence belongs to the bacterial ribosomal protein bS21 family.

The chain is Small ribosomal subunit protein bS21 from Pseudomonas fluorescens (strain ATCC BAA-477 / NRRL B-23932 / Pf-5).